The primary structure comprises 471 residues: Adenosylhomocysteinase (471 aa).

Substrate contacts are provided by threonine 60, aspartate 135, and glutamate 196. 197–199 is an NAD(+) binding site; the sequence is TTT. The substrate site is built by lysine 226 and aspartate 230. NAD(+)-binding positions include asparagine 231, 260–265, glutamate 283, asparagine 318, 339–341, and asparagine 387; these read GYGDVG and IGH.

It belongs to the adenosylhomocysteinase family. NAD(+) serves as cofactor.

It localises to the cytoplasm. The catalysed reaction is S-adenosyl-L-homocysteine + H2O = L-homocysteine + adenosine. Its pathway is amino-acid biosynthesis; L-homocysteine biosynthesis; L-homocysteine from S-adenosyl-L-homocysteine: step 1/1. In terms of biological role, may play a key role in the regulation of the intracellular concentration of adenosylhomocysteine. The polypeptide is Adenosylhomocysteinase (Chlorobium phaeobacteroides (strain DSM 266 / SMG 266 / 2430)).